Here is a 256-residue protein sequence, read N- to C-terminus: Ubiquinone/menaquinone biosynthesis C-methyltransferase UbiE (256 aa).

S-adenosyl-L-methionine contacts are provided by residues threonine 79, aspartate 100, and 128–129; that span reads DA.

Belongs to the class I-like SAM-binding methyltransferase superfamily. MenG/UbiE family.

The catalysed reaction is a 2-demethylmenaquinol + S-adenosyl-L-methionine = a menaquinol + S-adenosyl-L-homocysteine + H(+). It catalyses the reaction a 2-methoxy-6-(all-trans-polyprenyl)benzene-1,4-diol + S-adenosyl-L-methionine = a 5-methoxy-2-methyl-3-(all-trans-polyprenyl)benzene-1,4-diol + S-adenosyl-L-homocysteine + H(+). The protein operates within quinol/quinone metabolism; menaquinone biosynthesis; menaquinol from 1,4-dihydroxy-2-naphthoate: step 2/2. Its pathway is cofactor biosynthesis; ubiquinone biosynthesis. Its function is as follows. Methyltransferase required for the conversion of demethylmenaquinol (DMKH2) to menaquinol (MKH2) and the conversion of 2-polyprenyl-6-methoxy-1,4-benzoquinol (DDMQH2) to 2-polyprenyl-3-methyl-6-methoxy-1,4-benzoquinol (DMQH2). This chain is Ubiquinone/menaquinone biosynthesis C-methyltransferase UbiE, found in Pseudomonas fluorescens (strain Pf0-1).